Reading from the N-terminus, the 343-residue chain is Glyceraldehyde-3-phosphate dehydrogenase (343 aa).

Residues 13–14 (TI) and Gly111 each bind NAD(+). 140-142 (SCN) serves as a coordination point for D-glyceraldehyde 3-phosphate. The active-site Nucleophile is the Cys141. Arg169 lines the NAD(+) pocket. 195 to 196 (HA) is a D-glyceraldehyde 3-phosphate binding site. NAD(+) is bound at residue Gln303.

It belongs to the glyceraldehyde-3-phosphate dehydrogenase family. In terms of assembly, homotetramer.

The protein localises to the cytoplasm. It catalyses the reaction D-glyceraldehyde 3-phosphate + phosphate + NADP(+) = (2R)-3-phospho-glyceroyl phosphate + NADPH + H(+). The catalysed reaction is D-glyceraldehyde 3-phosphate + phosphate + NAD(+) = (2R)-3-phospho-glyceroyl phosphate + NADH + H(+). It participates in carbohydrate degradation; glycolysis; pyruvate from D-glyceraldehyde 3-phosphate: step 1/5. The chain is Glyceraldehyde-3-phosphate dehydrogenase from Sulfolobus acidocaldarius (strain ATCC 33909 / DSM 639 / JCM 8929 / NBRC 15157 / NCIMB 11770).